Consider the following 230-residue polypeptide: Probable tetraspanin tspD (230 aa).

Topologically, residues M1–N20 are cytoplasmic. A helical transmembrane segment spans residues V21–F41. The Extracellular segment spans residues S42–P65. The chain crosses the membrane as a helical span at residues A66–A86. Residues Y87–K90 lie on the Cytoplasmic side of the membrane. The chain crosses the membrane as a helical span at residues M91–I111. Residues G112–S200 are Extracellular-facing. N-linked (GlcNAc...) asparagine glycosylation is found at N133, N138, N163, and N179. The helical transmembrane segment at A201–V221 threads the bilayer. The Cytoplasmic segment spans residues R222–R230.

It belongs to the tetraspanin (TM4SF) family.

The protein resides in the membrane. This chain is Probable tetraspanin tspD (tspD), found in Dictyostelium discoideum (Social amoeba).